A 317-amino-acid polypeptide reads, in one-letter code: Toluene-4-sulfonate monooxygenase system reductase subunit TsaB1 (317 aa).

In terms of domain architecture, FAD-binding FR-type spans 2 to 108 (SADVPVTVAA…RATCSEMAPE (107 aa)). 110–220 (RRVLLLAGGI…PGSVRMERFK (111 aa)) contacts NAD(+). Residues 230-317 (QPFELVLQRA…CGGGRLVLDI (88 aa)) enclose the 2Fe-2S ferredoxin-type domain. [2Fe-2S] cluster is bound by residues C266, C271, C274, and C304.

In terms of assembly, monomer. Part of the p-toluenesulfonate methyl-monooxygenase complex TsaBM, comprising the reductase TsaB and the oxygenase TsaM. It depends on FMN as a cofactor.

Functionally, iron-sulfur flavoprotein carrying electrons from NADH to the oxygenase TsaM. Involved in the toluene-4-sulfonate degradation pathway. In Comamonas testosteroni (Pseudomonas testosteroni), this protein is Toluene-4-sulfonate monooxygenase system reductase subunit TsaB1 (tsaB1).